The sequence spans 1040 residues: Myoblast growth factor receptor egl-15 (1040 aa).

The first 19 residues, 1–19 (MSYFLASCLGVGLLSTVSC), serve as a signal peptide directing secretion. Topologically, residues 20–525 (SLQGLTSHYR…PKIDRWTTSD (506 aa)) are extracellular. Residues 33–125 (PRFKHVANER…GQISRNFTVE (93 aa)) form the Ig-like C2-type 1 domain. Cys-55 and Cys-109 are oxidised to a cystine. Asn-121 is a glycosylation site (N-linked (GlcNAc...) asparagine). Residues 234-257 (VHDSEESPSESRTEFINADEKENK) show a composition bias toward basic and acidic residues. Residues 234–267 (VHDSEESPSESRTEFINADEKENKEDEEEDYSVS) are disordered. Residues Asn-280 and Asn-299 are each glycosylated (N-linked (GlcNAc...) asparagine). 2 consecutive Ig-like C2-type domains span residues 287-383 (PYFK…FHVI) and 391-501 (PPII…ATLT). Residues Cys-314 and Cys-367 are joined by a disulfide bond. Residues Asn-401, Asn-407, Asn-433, Asn-440, Asn-449, Asn-474, and Asn-497 are each glycosylated (N-linked (GlcNAc...) asparagine). Cys-414 and Cys-485 are oxidised to a cystine. A helical membrane pass occupies residues 526 to 549 (YIFTTILLFLLLAATLFGILFMVC). At 550 to 1040 (KQTLHKKGFM…NNNSMSKPEF (491 aa)) the chain is on the cytoplasmic side. The Protein kinase domain occupies 640 to 931 (LSLVHMLGEG…KTIVDYLDWM (292 aa)). ATP is bound by residues 646-654 (LGEGAFGEV) and Lys-672. Residue Asp-797 is the Proton acceptor of the active site. Tyr-828 bears the Phosphotyrosine; by autocatalysis mark. Disordered regions lie at residues 952-984 (ERST…LPSE) and 1021-1040 (TPET…KPEF). Polar residues predominate over residues 1022–1040 (PETSQRIPSNNNSMSKPEF).

Belongs to the protein kinase superfamily. Tyr protein kinase family. Fibroblast growth factor receptor subfamily. Mg(2+) is required as a cofactor. In terms of processing, activity is regulated by the phosphatase clr-1, however it is not known whether clr-1 acts directly on egl-15.

The protein resides in the membrane. It catalyses the reaction L-tyrosyl-[protein] + ATP = O-phospho-L-tyrosyl-[protein] + ADP + H(+). Functionally, receptor tyrosine kinase required for larval development. May phosphorylate adapter protein soc-1 which in turn may result in the recruitment and/or activation of phosphatase ptp-2. May activate the Ras/MAPK kinase signaling pathway which includes sem-5, sos-1, let-60/Ras, lin-45/Raf, mek-2 and mpk-1. Acts in the hypodermis to regulate axon growth and fluid homeostasis. Activates protein degradation in muscles. Probably following interaction with ligand let-756, negatively regulates membrane protrusion from body wall muscles during larval development. Plays a role in nicotinic acetylcholine receptor (nAChR)-mediated sensitivity to nicotine. Regulates synaptic levels of nAChR subunit lev-1 in the nerve cord. Its function is as follows. Affects the maintenance of axon position without affecting axon growth. Interaction with egl-17 is required for the guidance of sex myoblast migration during gonad development. Interaction with let-756 appears to play a role in maintaining body morphology at higher temperatures. This Caenorhabditis elegans protein is Myoblast growth factor receptor egl-15 (egl-15).